Consider the following 147-residue polypeptide: Ubiquitin-conjugating enzyme E2 D2 (147 aa).

In terms of domain architecture, UBC core spans 1 to 147; it reads MALKRIHKEL…AREWTQKYAM (147 aa). The active-site Glycyl thioester intermediate is Cys-85.

The protein belongs to the ubiquitin-conjugating enzyme family. Interacts with SCF (SKP1-CUL1-F-box protein) E3 ubiquitin ligase complex. Interacts with CNOT4 (via RING domain). Interacts with E3 ubiquitin-protein ligases CBLC, PJA1 and PJA2. Interacts with PDZRN3. Interacts with PPP1R11. Interacts with E3 ubiquitin-protein ligase PHF7; the interaction inhibits cleavage of PHF7 and promotes association of the complex with the nucleosome core particle.

The enzyme catalyses S-ubiquitinyl-[E1 ubiquitin-activating enzyme]-L-cysteine + [E2 ubiquitin-conjugating enzyme]-L-cysteine = [E1 ubiquitin-activating enzyme]-L-cysteine + S-ubiquitinyl-[E2 ubiquitin-conjugating enzyme]-L-cysteine.. The catalysed reaction is S-ubiquitinyl-[E1 ubiquitin-activating enzyme]-L-cysteine + [acceptor protein]-L-lysine = [E1 ubiquitin-activating enzyme]-L-cysteine + N(6)-monoubiquitinyl-[acceptor protein]-L-lysine.. It functions in the pathway protein modification; protein ubiquitination. Functionally, accepts ubiquitin from the E1 complex and catalyzes its covalent attachment to other proteins. In vitro catalyzes 'Lys-48'-linked polyubiquitination. Mediates the selective degradation of short-lived and abnormal proteins. Functions in the E6/E6-AP-induced ubiquitination of p53/TP53. Mediates ubiquitination of PEX5 and SQSTM1 and autoubiquitination of STUB1 and TRAF6. Involved in the signal-induced conjugation and subsequent degradation of NFKBIA, FBXW2-mediated GCM1 ubiquitination and degradation, MDM2-dependent degradation of p53/TP53 and the activation of MAVS in the mitochondria by RIGI in response to viral infection. Essential for viral activation of IRF3. This Bos taurus (Bovine) protein is Ubiquitin-conjugating enzyme E2 D2 (UBE2D2).